Here is a 273-residue protein sequence, read N- to C-terminus: Protein FAM210A (273 aa).

Residues 94–116 (RVLSSSSTSQETPSEKKEETDPL) are disordered. A compositionally biased stretch (basic and acidic residues) spans 106–116 (PSEKKEETDPL). A DUF1279 domain is found at 118-230 (DKSISLYQRF…GYMSTPPPVK (113 aa)). The helical transmembrane segment at 138–158 (LIPVHLITSGIWFGTFYYATI) threads the bilayer. Residues 233–269 (LQGRMEETKELITEKMEETKDRLTEKLQETKGKVSFK) are a coiled coil.

The protein belongs to the FAM210 family. Interacts with ATAD3A. In terms of tissue distribution, expressed in skeletal muscle, heart, brain but not in bone.

The protein localises to the membrane. The protein resides in the mitochondrion. Its subcellular location is the cytoplasm. May play a role in the structure and strength of both muscle and bone. The protein is Protein FAM210A (Fam210a) of Mus musculus (Mouse).